Consider the following 468-residue polypeptide: BTB and MATH domain-containing protein 45 (468 aa).

In terms of domain architecture, MATH spans 7 to 124 (VFELSHVFKD…DDSIIIEVLV (118 aa)). 2 BTB domains span residues 148-215 (SDGI…IDDD) and 304-368 (SDVI…IDDL).

This Caenorhabditis elegans protein is BTB and MATH domain-containing protein 45 (bath-45).